The sequence spans 367 residues: Queuine tRNA-ribosyltransferase (367 aa).

The active-site Proton acceptor is the Asp-92. Residues 92-96, Asp-146, Gln-188, and Gly-215 each bind substrate; that span reads DSGGF. The interval 246–252 is RNA binding; it reads GVGTPKD. Asp-265 acts as the Nucleophile in catalysis. 4 residues coordinate Zn(2+): Cys-303, Cys-305, Cys-308, and His-334.

The protein belongs to the queuine tRNA-ribosyltransferase family. As to quaternary structure, homodimer. Within each dimer, one monomer is responsible for RNA recognition and catalysis, while the other monomer binds to the replacement base PreQ1. Zn(2+) serves as cofactor.

It carries out the reaction 7-aminomethyl-7-carbaguanine + guanosine(34) in tRNA = 7-aminomethyl-7-carbaguanosine(34) in tRNA + guanine. Its pathway is tRNA modification; tRNA-queuosine biosynthesis. Functionally, catalyzes the base-exchange of a guanine (G) residue with the queuine precursor 7-aminomethyl-7-deazaguanine (PreQ1) at position 34 (anticodon wobble position) in tRNAs with GU(N) anticodons (tRNA-Asp, -Asn, -His and -Tyr). Catalysis occurs through a double-displacement mechanism. The nucleophile active site attacks the C1' of nucleotide 34 to detach the guanine base from the RNA, forming a covalent enzyme-RNA intermediate. The proton acceptor active site deprotonates the incoming PreQ1, allowing a nucleophilic attack on the C1' of the ribose to form the product. After dissociation, two additional enzymatic reactions on the tRNA convert PreQ1 to queuine (Q), resulting in the hypermodified nucleoside queuosine (7-(((4,5-cis-dihydroxy-2-cyclopenten-1-yl)amino)methyl)-7-deazaguanosine). The polypeptide is Queuine tRNA-ribosyltransferase (Francisella tularensis subsp. novicida (strain U112)).